The sequence spans 289 residues: MPSPCTYGDPTFNSRILEAVVADVLGGTEDDGGPSLEEWFDAQTLSDYTNCATDPPMATVHTRENDIKSWTELSENFPDLVRYPESLVETLLDTEHECGHFYDAPDSFQISVTAMFTDRCKCQFCDPNFQARSLSRALLGPLPESGDDAEWMEQAYTPDAELFVNEPTDDPIPTTDCKRPIQPTWSVDVYSKQVDSDWGLSDSTNVTVCSASSSLLPAGRGGIYFMCPRPEGIERVCLQVGAKIRSGAPNSGTITNLPGGTGYGTEWSDDGYETQWSDGPYSIPSGLSD.

The interval 268-289 is disordered; it reads SDDGYETQWSDGPYSIPSGLSD.

This is an uncharacterized protein from Zea mays (Maize).